Consider the following 150-residue polypeptide: Flagellar basal-body rod protein FlgC (150 aa).

Belongs to the flagella basal body rod proteins family. In terms of assembly, the basal body constitutes a major portion of the flagellar organelle and consists of four rings (L,P,S, and M) mounted on a central rod. The rod consists of about 26 subunits of FlgG in the distal portion, and FlgB, FlgC and FlgF are thought to build up the proximal portion of the rod with about 6 subunits each.

Its subcellular location is the bacterial flagellum basal body. The chain is Flagellar basal-body rod protein FlgC (flgC) from Bacillus subtilis (strain 168).